The sequence spans 453 residues: UDP-glycosyltransferase 74E1 (453 aa).

Residues S279, 332–334 (SPQ), 349–357 (HCGWNSTLE), and 371–374 (WADQ) contribute to the UDP-alpha-D-glucose site.

Belongs to the UDP-glycosyltransferase family.

The protein is UDP-glycosyltransferase 74E1 (UGT74E1) of Arabidopsis thaliana (Mouse-ear cress).